An 85-amino-acid chain; its full sequence is MKTDIHPKYAPVVFRDLASGATFLTRSTVSSSKTIVWEDGNEYAVIDVEISSESHPFYTGKQRIMDSAGRVEKFNSRYAGFGTKK.

It belongs to the bacterial ribosomal protein bL31 family. Type B subfamily. Part of the 50S ribosomal subunit.

The sequence is that of Large ribosomal subunit protein bL31B from Clavibacter sepedonicus (Clavibacter michiganensis subsp. sepedonicus).